The following is a 281-amino-acid chain: ATP phosphoribosyltransferase (281 aa).

It belongs to the ATP phosphoribosyltransferase family. Long subfamily. Mg(2+) is required as a cofactor.

It localises to the cytoplasm. The enzyme catalyses 1-(5-phospho-beta-D-ribosyl)-ATP + diphosphate = 5-phospho-alpha-D-ribose 1-diphosphate + ATP. The protein operates within amino-acid biosynthesis; L-histidine biosynthesis; L-histidine from 5-phospho-alpha-D-ribose 1-diphosphate: step 1/9. Feedback inhibited by histidine. Functionally, catalyzes the condensation of ATP and 5-phosphoribose 1-diphosphate to form N'-(5'-phosphoribosyl)-ATP (PR-ATP). Has a crucial role in the pathway because the rate of histidine biosynthesis seems to be controlled primarily by regulation of HisG enzymatic activity. This Archaeoglobus fulgidus (strain ATCC 49558 / DSM 4304 / JCM 9628 / NBRC 100126 / VC-16) protein is ATP phosphoribosyltransferase (hisG).